Here is a 1200-residue protein sequence, read N- to C-terminus: SR-related and CTD-associated factor 4 (1200 aa).

The 139-residue stretch at 1–139 folds into the CID domain; that stretch reads MDAVNAFNQE…PLLDMAAGTS (139 aa). The residue at position 49 (Lys49) is an N6-acetyllysine. Polar residues predominate over residues 140 to 153; it reads NAAPGAENVTNNEG. Disordered stretches follow at residues 140-172, 299-324, and 346-566; these read NAAP…PTNS, VPAS…MQQP, and SMQH…QIKS. Phosphoserine is present on Ser154. Composition is skewed to pro residues over residues 367–390 and 399–461; these read APPP…PGMP and LPQP…PPVQ. Over residues 462 to 471 the composition is skewed to low complexity; it reads PTFQPTFQPQ. Over residues 493–503 the composition is skewed to basic and acidic residues; sequence EVKRHVPESRK. Residues 504–541 are compositionally biased toward basic residues; it reads SRSRSPKRRRSRSGSRSRRSRHRRSRSRSRDRRRHSPR. Residues 543-558 are compositionally biased toward basic and acidic residues; it reads RSQERRDREKERERRQ. The 75-residue stretch at 574–648 folds into the RRM domain; it reads TTLWVGQLDK…KSIKIAWALN (75 aa). 3 disordered regions span residues 696–724, 834–875, and 927–1200; these read WKGI…VSPI, VSGA…SLLG, and PPHM…EAPR. Ser722 bears the Phosphoserine mark. Pro residues-rich tracts occupy residues 856-868 and 927-958; these read PAAP…PPVT and PPHM…PPHG. A compositionally biased stretch (gly residues) spans 965 to 978; the sequence is GMPGLGGPGPGPGG. Over residues 986–1036 the composition is skewed to low complexity; the sequence is QQQPQQQQQQQQQQQQQQQQQQQQPPPQQSQTQQQPAPSQQPAPAQQQPQQ. Ser1058 carries the phosphoserine modification. Over residues 1063–1139 the composition is skewed to basic and acidic residues; sequence VENDRERYGS…RGKEKHEVAD (77 aa). Polar residues predominate over residues 1153–1162; the sequence is QVGNTDTVSE. Position 1178 is a phosphoserine (Ser1178).

In terms of assembly, interacts with POLR2A; via C-terminal heptapeptide repeat domain (CTD) phosphorylated at 'Ser-2' and 'Ser-5'.

The protein localises to the nucleus. Functionally, anti-terminator protein required to prevent early mRNA termination during transcription. Together with SCAF8, acts by suppressing the use of early, alternative poly(A) sites, thereby preventing the accumulation of non-functional truncated proteins. Mechanistically, associates with the phosphorylated C-terminal heptapeptide repeat domain (CTD) of the largest RNA polymerase II subunit (POLR2A), and subsequently binds nascent RNA upstream of early polyadenylation sites to prevent premature mRNA transcript cleavage and polyadenylation. Independently of SCAF8, also acts as a suppressor of transcriptional readthrough. This chain is SR-related and CTD-associated factor 4, found in Rattus norvegicus (Rat).